The primary structure comprises 387 residues: Large ribosomal subunit protein uL3 (387 aa).

The protein belongs to the universal ribosomal protein uL3 family.

It is found in the cytoplasm. This is Large ribosomal subunit protein uL3 (RPL3) from Eremothecium gossypii (strain ATCC 10895 / CBS 109.51 / FGSC 9923 / NRRL Y-1056) (Yeast).